The following is a 994-amino-acid chain: NACHT, LRR and PYD domains-containing protein 4 (994 aa).

The region spanning 1–94 (MAASFFSDFG…CMKVMRERTG (94 aa)) is the Pyrin domain. Positions 149 to 472 (RTVIIQGPQG…FYLLKSHLDH (324 aa)) constitute an NACHT domain. ATP is bound at residue 155 to 162 (GPQGIGKT). 8 LRR repeats span residues 637-660 (SGHL…TWCN), 698-721 (YLSF…LNYP), 722-745 (AGNV…VLAG), 750-777 (NKKL…LCSP), 806-833 (NKSV…ALKH), 863-886 (NQNL…LLCR), 920-943 (SKTL…VLCE), and 949-972 (ECAL…LLTA).

It belongs to the NLRP family. As to quaternary structure, interacts with CHUK/IKKA, inhibiting its kinase activity.

In terms of biological role, may be involved in inflammation and recognition of cytosolic pathogen-associated molecular patterns (PAMPs) not intercepted by membrane-bound receptors. Acts as a negative regulator of the type I interferon signaling pathway by serving as an adapter to promote DTX4-mediated ubiquitination of activated TBK1, and its subsequent degradation. Suppresses NF-kappaB induction by the cytokines TNFA and IL1B, suggesting that it operates at a point of convergence in these two cytokine signaling pathways. The sequence is that of NACHT, LRR and PYD domains-containing protein 4 from Homo sapiens (Human).